Reading from the N-terminus, the 460-residue chain is Bifunctional beta-D-glucosidase/beta-D-fucosidase (460 aa).

The active-site Proton donor is the E168. E362 functions as the Nucleophile in the catalytic mechanism.

Belongs to the glycosyl hydrolase 1 family. In terms of assembly, monomer.

It localises to the secreted. It carries out the reaction Hydrolysis of terminal, non-reducing beta-D-glucosyl residues with release of beta-D-glucose.. The enzyme catalyses Hydrolysis of terminal non-reducing beta-D-fucose residues in beta-D-fucosides.. With respect to regulation, inhibited by Cu(2+), Ag(+) and Hg(+), but not by other cations such as Mg(2+), Ca(2+), Mn(2+) and Co(2+). Inhibited by 1-amino-1-deoxy-D-glucose and p-chloromercuribenzoic acid, but not by EDTA or dithiothreitol. Inhibited by the disaccharides sucrose, lactose and cellobiose. The monosaccharides D-fructose, D-mannose, D-xylose and D-glucose increase the beta-D-fucosidase activity, but not the beta-D-glucosidase activity. D-glucose inhibits the beta-D-glucosidase activity, but promotes the beta-D-fucosidase activity. D-fucose inhibits the beta-D-glucosidase activity and does not significantly affect the beta-D-fucosidase activity. Its function is as follows. Bifunctional beta-D-glucosidase/beta-D-fucosidase. Activity towards pNP-beta-D-fucoside is about 80-85% of the activity towards pNP-beta-D-glucoside. Also has slight activity (less than 10%) towards pNP-beta-D-galactoside, and very low activity (less than 1%) towards pNP-beta-D-xyloside. Hydrolyzes laminaribiose, sophorose, cellobiose and gentobiose. Not active against maltose, pNP-alpha-D-glucoside or pNP-beta-L-fucoside. In Bifidobacterium breve, this protein is Bifunctional beta-D-glucosidase/beta-D-fucosidase.